A 244-amino-acid polypeptide reads, in one-letter code: Derlin-2.2 (244 aa).

At 1 to 21 the chain is on the cytoplasmic side; it reads MAQAVEEWYKQMPIITRSYLT. The chain crosses the membrane as a helical span at residues 22-42; that stretch reads AAVITTVGCSLDIISPYNLYL. The Lumenal portion of the chain corresponds to 43 to 96; that stretch reads NPTLVVKQYQYWRLVTNFLYFRKMDLDFMFHMFFLARYCKLLEENSFRGKTADF. Residues 97-117 form a helical membrane-spanning segment; that stretch reads LYMLLFGASVLTGIVLIGGMI. At 118 to 121 the chain is on the cytoplasmic side; that stretch reads PYLS. The helical transmembrane segment at 122–142 threads the bilayer; sequence ASFAKIIFLSNSLTFMMVYVW. Topologically, residues 143–152 are lumenal; that stretch reads SKQNPYIHMS. Residues 153 to 173 form a helical membrane-spanning segment; sequence FLGLFTFTAAYLPWVLLGFSI. Topologically, residues 174–244 are cytoplasmic; it reads LVGASAWVDL…AAPFDEIHQD (71 aa).

Belongs to the derlin family.

Its subcellular location is the endoplasmic reticulum membrane. Its function is as follows. May be involved in the degradation process of specific misfolded endoplasmic reticulum (ER) luminal proteins. The chain is Derlin-2.2 (DER2.2) from Arabidopsis thaliana (Mouse-ear cress).